Reading from the N-terminus, the 270-residue chain is Formamidopyrimidine-DNA glycosylase (270 aa).

P2 (schiff-base intermediate with DNA) is an active-site residue. E3 acts as the Proton donor in catalysis. K57 functions as the Proton donor; for beta-elimination activity in the catalytic mechanism. DNA contacts are provided by H90, R109, and K151. The FPG-type zinc-finger motif lies at 236–270 (RVYGRKGQACEVCESEIQSVTLGQRNTFFCEQCQK). R260 acts as the Proton donor; for delta-elimination activity in catalysis.

This sequence belongs to the FPG family. Monomer. Zn(2+) is required as a cofactor.

The enzyme catalyses Hydrolysis of DNA containing ring-opened 7-methylguanine residues, releasing 2,6-diamino-4-hydroxy-5-(N-methyl)formamidopyrimidine.. The catalysed reaction is 2'-deoxyribonucleotide-(2'-deoxyribose 5'-phosphate)-2'-deoxyribonucleotide-DNA = a 3'-end 2'-deoxyribonucleotide-(2,3-dehydro-2,3-deoxyribose 5'-phosphate)-DNA + a 5'-end 5'-phospho-2'-deoxyribonucleoside-DNA + H(+). In terms of biological role, involved in base excision repair of DNA damaged by oxidation or by mutagenic agents. Acts as a DNA glycosylase that recognizes and removes damaged bases. Has a preference for oxidized purines, such as 7,8-dihydro-8-oxoguanine (8-oxoG). Has AP (apurinic/apyrimidinic) lyase activity and introduces nicks in the DNA strand. Cleaves the DNA backbone by beta-delta elimination to generate a single-strand break at the site of the removed base with both 3'- and 5'-phosphates. This Pseudoalteromonas atlantica (strain T6c / ATCC BAA-1087) protein is Formamidopyrimidine-DNA glycosylase.